A 507-amino-acid polypeptide reads, in one-letter code: Subtilisin-like protease 1 (507 aa).

Residues 1-19 (MGVFRFISISLAAVSAANA) form the signal peptide. The propeptide occupies 20-116 (AQILSMPHAQ…VEPDTIISVN (97 aa)). Residues 34–113 (SYIVMMKDDT…VMFVEPDTII (80 aa)) enclose the Inhibitor I9 domain. A Peptidase S8 domain is found at 126–400 (SWGLARISNS…NVLISNGGAK (275 aa)). Residues Asp158 and His190 each act as charge relay system in the active site. The tract at residues 175 to 198 (GSNQVNDGDDRDGSGHGTHTSGTM) is disordered. N-linked (GlcNAc...) asparagine glycosylation occurs at Asn251. Positions 282–294 (NENQDARSSSPAS) are enriched in polar residues. The disordered stretch occupies residues 282–312 (NENQDARSSSPASEPSVCTVGSSAEDDSRSS). Ser345 (charge relay system) is an active-site residue. A compositionally biased stretch (polar residues) spans 378-394 (SSSITDVGPGTPTNVLI). Residues 378–486 (SSSITDVGPG…YPGGDNFDFD (109 aa)) form a disordered region. 2 stretches are compositionally biased toward pro residues: residues 405–428 (KPAP…PSQP) and 438–449 (EPFPGEPFPGEP). Positions 450–461 (FPGESSPGESAP) are enriched in low complexity. The span at 462–476 (APAPMPPSPQHPHTP) shows a compositional bias: pro residues.

Belongs to the peptidase S8 family.

The protein resides in the secreted. Functionally, secreted subtilisin-like serine protease with keratinolytic activity that contributes to pathogenicity. This is Subtilisin-like protease 1 (SUB1) from Trichophyton tonsurans (Scalp ringworm fungus).